The following is a 169-amino-acid chain: Peptide methionine sulfoxide reductase MsrA (169 aa).

Cysteine 13 is an active-site residue.

This sequence belongs to the MsrA Met sulfoxide reductase family.

The catalysed reaction is L-methionyl-[protein] + [thioredoxin]-disulfide + H2O = L-methionyl-(S)-S-oxide-[protein] + [thioredoxin]-dithiol. The enzyme catalyses [thioredoxin]-disulfide + L-methionine + H2O = L-methionine (S)-S-oxide + [thioredoxin]-dithiol. Has an important function as a repair enzyme for proteins that have been inactivated by oxidation. Catalyzes the reversible oxidation-reduction of methionine sulfoxide in proteins to methionine. The chain is Peptide methionine sulfoxide reductase MsrA from Mycolicibacterium gilvum (strain PYR-GCK) (Mycobacterium gilvum (strain PYR-GCK)).